A 118-amino-acid polypeptide reads, in one-letter code: Peptidyl-tRNA hydrolase (118 aa).

Belongs to the PTH2 family.

It is found in the cytoplasm. It catalyses the reaction an N-acyl-L-alpha-aminoacyl-tRNA + H2O = an N-acyl-L-amino acid + a tRNA + H(+). In terms of biological role, the natural substrate for this enzyme may be peptidyl-tRNAs which drop off the ribosome during protein synthesis. In Thermococcus sibiricus (strain DSM 12597 / MM 739), this protein is Peptidyl-tRNA hydrolase.